A 1113-amino-acid polypeptide reads, in one-letter code: Carbamoyl phosphate synthase large chain (1113 aa).

A carboxyphosphate synthetic domain region spans residues 1 to 407 (MPKRSDINHV…ALNKALRSLE (407 aa)). The ATP site is built by arginine 134, arginine 174, glycine 180, glycine 181, glutamate 213, isoleucine 215, glutamate 220, glycine 246, valine 247, histidine 248, glutamine 290, and glutamate 304. The region spanning 138–333 (KDIVTTIGGE…IAKMAAKLAI (196 aa)) is the ATP-grasp 1 domain. Residues glutamine 290, glutamate 304, and asparagine 306 each coordinate Mg(2+). 3 residues coordinate Mn(2+): glutamine 290, glutamate 304, and asparagine 306. Residues 408 to 565 (TKQQGFWTKP…ELDPAAESEV (158 aa)) are oligomerization domain. Residues 566-967 (APQTEREKVL…AYAKAEAGAF (402 aa)) form a carbamoyl phosphate synthetic domain region. In terms of domain architecture, ATP-grasp 2 spans 695-886 (GALLNREQLP…LAKAASRIAV (192 aa)). Residues arginine 731, arginine 770, leucine 772, glutamate 777, glycine 802, isoleucine 803, histidine 804, serine 805, glutamine 845, and glutamate 857 each coordinate ATP. Residues glutamine 845, glutamate 857, and asparagine 859 each contribute to the Mg(2+) site. The Mn(2+) site is built by glutamine 845, glutamate 857, and asparagine 859. Positions 968–1113 (GALPTEGTVF…LQELDHAVKA (146 aa)) constitute an MGS-like domain. The tract at residues 968–1113 (GALPTEGTVF…LQELDHAVKA (146 aa)) is allosteric domain.

Belongs to the CarB family. Composed of two chains; the small (or glutamine) chain promotes the hydrolysis of glutamine to ammonia, which is used by the large (or ammonia) chain to synthesize carbamoyl phosphate. Tetramer of heterodimers (alpha,beta)4. Mg(2+) serves as cofactor. Requires Mn(2+) as cofactor.

It carries out the reaction hydrogencarbonate + L-glutamine + 2 ATP + H2O = carbamoyl phosphate + L-glutamate + 2 ADP + phosphate + 2 H(+). The enzyme catalyses hydrogencarbonate + NH4(+) + 2 ATP = carbamoyl phosphate + 2 ADP + phosphate + 2 H(+). Its pathway is amino-acid biosynthesis; L-arginine biosynthesis; carbamoyl phosphate from bicarbonate: step 1/1. It functions in the pathway pyrimidine metabolism; UMP biosynthesis via de novo pathway; (S)-dihydroorotate from bicarbonate: step 1/3. In terms of biological role, large subunit of the glutamine-dependent carbamoyl phosphate synthetase (CPSase). CPSase catalyzes the formation of carbamoyl phosphate from the ammonia moiety of glutamine, carbonate, and phosphate donated by ATP, constituting the first step of 2 biosynthetic pathways, one leading to arginine and/or urea and the other to pyrimidine nucleotides. The large subunit (synthetase) binds the substrates ammonia (free or transferred from glutamine from the small subunit), hydrogencarbonate and ATP and carries out an ATP-coupled ligase reaction, activating hydrogencarbonate by forming carboxy phosphate which reacts with ammonia to form carbamoyl phosphate. In Corynebacterium glutamicum (strain ATCC 13032 / DSM 20300 / JCM 1318 / BCRC 11384 / CCUG 27702 / LMG 3730 / NBRC 12168 / NCIMB 10025 / NRRL B-2784 / 534), this protein is Carbamoyl phosphate synthase large chain.